We begin with the raw amino-acid sequence, 75 residues long: Mating pheromone Er-10 (75 aa).

Residues 1-19 (MNKLAILAIIAMVLFSANA) form the signal peptide. Residues 20-37 (FRFQSRIRSNVEAKTETR) constitute a propeptide that is removed on maturation. Disulfide bonds link Cys-40-Cys-56, Cys-47-Cys-74, and Cys-52-Cys-64.

As to quaternary structure, homodimer.

The protein localises to the secreted. Mating ciliate pheromones (or gamones) are diffusible extracellular communication signals that distinguish different intraspecific classes of cells commonly referred to as 'mating types'. They prepare the latter for conjugation by changing their cell surface properties. The sequence is that of Mating pheromone Er-10 (MAT10) from Euplotes raikovi.